Reading from the N-terminus, the 322-residue chain is Gluconeogenesis factor (322 aa).

Residues threonine 13, 217-219, 263-267, and 300-301 each bind NAD(+); these read NVM, KYAKE, and RH.

Belongs to the gluconeogenesis factor family.

Its subcellular location is the cytoplasm. Required for morphogenesis under gluconeogenic growth conditions. In Halalkalibacterium halodurans (strain ATCC BAA-125 / DSM 18197 / FERM 7344 / JCM 9153 / C-125) (Bacillus halodurans), this protein is Gluconeogenesis factor.